Consider the following 68-residue polypeptide: Erythrodihydroneopterin triphosphate synthetase (68 aa).

Residue Ser-66 is modified to Phosphoserine.

The chain is Erythrodihydroneopterin triphosphate synthetase from Cavia porcellus (Guinea pig).